The chain runs to 370 residues: Flagellar P-ring protein 1 (370 aa).

A signal peptide spans 1–25; the sequence is MSVLIKTRHCFVLLGLWLVLPTASA.

This sequence belongs to the FlgI family. In terms of assembly, the basal body constitutes a major portion of the flagellar organelle and consists of four rings (L,P,S, and M) mounted on a central rod.

The protein localises to the periplasm. It localises to the bacterial flagellum basal body. In terms of biological role, assembles around the rod to form the L-ring and probably protects the motor/basal body from shearing forces during rotation. This is Flagellar P-ring protein 1 from Yersinia pestis.